The primary structure comprises 394 residues: Elongation factor Tu (394 aa).

The region spanning 10–204 (KPHVNVGTIG…ALDTYIPEPE (195 aa)) is the tr-type G domain. The tract at residues 19-26 (GHVDHGKT) is G1. 19–26 (GHVDHGKT) contributes to the GTP binding site. T26 serves as a coordination point for Mg(2+). Residues 60-64 (GITIN) form a G2 region. The tract at residues 81–84 (DCPG) is G3. Residues 81–85 (DCPGH) and 136–139 (NKCD) contribute to the GTP site. The segment at 136–139 (NKCD) is G4. Residues 174–176 (SAL) form a G5 region.

This sequence belongs to the TRAFAC class translation factor GTPase superfamily. Classic translation factor GTPase family. EF-Tu/EF-1A subfamily. In terms of assembly, monomer.

The protein localises to the cytoplasm. It catalyses the reaction GTP + H2O = GDP + phosphate + H(+). Functionally, GTP hydrolase that promotes the GTP-dependent binding of aminoacyl-tRNA to the A-site of ribosomes during protein biosynthesis. This is Elongation factor Tu from Colwellia psychrerythraea (strain 34H / ATCC BAA-681) (Vibrio psychroerythus).